The primary structure comprises 266 residues: Beta-lactamase OXA-19 (266 aa).

The first 20 residues, 1-20, serve as a signal peptide directing secretion; the sequence is MKTFAAYVITACLSSTALAS. The active-site Acyl-ester intermediate is the Ser-67. Lys-70 is subject to N6-carboxylysine. 205–207 contributes to the substrate binding site; that stretch reads KTG.

This sequence belongs to the class-D beta-lactamase family.

It catalyses the reaction a beta-lactam + H2O = a substituted beta-amino acid. This chain is Beta-lactamase OXA-19 (bla), found in Pseudomonas aeruginosa.